The primary structure comprises 33 residues: Photosystem II reaction center protein Psb30 (33 aa).

Residues 5–25 form a helical membrane-spanning segment; sequence LIVQLTSLALITLAGPLIVAL.

It belongs to the Psb30/Ycf12 family. PSII is composed of 1 copy each of membrane proteins PsbA, PsbB, PsbC, PsbD, PsbE, PsbF, PsbH, PsbI, PsbJ, PsbK, PsbL, PsbM, PsbT, PsbY, PsbZ, Psb30/Ycf12, peripheral proteins of the oxygen-evolving complex and a large number of cofactors. It forms dimeric complexes.

The protein resides in the plastid. Its subcellular location is the chloroplast thylakoid membrane. Functionally, a core subunit of photosystem II (PSII), probably helps stabilize the reaction center. This chain is Photosystem II reaction center protein Psb30, found in Euglena sanguinea.